The sequence spans 929 residues: LPS-assembly protein LptD (929 aa).

Residues Met1–Ala24 form the signal peptide. The tract at residues Leu26–Ala208 is disordered. Basic and acidic residues predominate over residues Gly44 to Ser74. A compositionally biased stretch (polar residues) spans Arg154–Ala164. Over residues Asp181–Ala208 the composition is skewed to basic and acidic residues.

Belongs to the LptD family. As to quaternary structure, component of the lipopolysaccharide transport and assembly complex. Interacts with LptE and LptA.

The protein localises to the cell outer membrane. Functionally, together with LptE, is involved in the assembly of lipopolysaccharide (LPS) at the surface of the outer membrane. The sequence is that of LPS-assembly protein LptD from Nitrosospira multiformis (strain ATCC 25196 / NCIMB 11849 / C 71).